The following is a 422-amino-acid chain: ATP-dependent Clp protease ATP-binding subunit ClpX 1 (422 aa).

One can recognise a ClpX-type ZB domain in the interval 4-57; that stretch reads DRKNRESGKLLYCSFCGKSQHEVRKLIAGPAVFVCDECVELCNDIIREDLQGSE. Positions 16, 19, 38, and 41 each coordinate Zn(2+). 120-127 contributes to the ATP binding site; the sequence is PTGSGKTL.

The protein belongs to the ClpX chaperone family. In terms of assembly, component of the ClpX-ClpP complex. Forms a hexameric ring that, in the presence of ATP, binds to fourteen ClpP subunits assembled into a disk-like structure with a central cavity, resembling the structure of eukaryotic proteasomes.

Functionally, ATP-dependent specificity component of the Clp protease. It directs the protease to specific substrates. Can perform chaperone functions in the absence of ClpP. The sequence is that of ATP-dependent Clp protease ATP-binding subunit ClpX 1 from Methylococcus capsulatus (strain ATCC 33009 / NCIMB 11132 / Bath).